The primary structure comprises 635 residues: Probable ethylene response sensor 2 (635 aa).

Transmembrane regions (helical) follow at residues 24–44, 59–79, and 94–114; these read ISDF…IYFV, FGAF…TFAI, and ATAV…PDLL. Cu cation-binding residues include Cys66 and His70. Positions 159-308 constitute a GAF domain; that stretch reads DRHTILRTTL…VVADQVAVAL (150 aa). The region spanning 351 to 589 is the Histidine kinase domain; that stretch reads VMNHEMRTPM…MFFVKLGMPE (239 aa). Phosphohistidine; by autocatalysis is present on His354.

The protein belongs to the ethylene receptor family. As to quaternary structure, homodimer. Cu cation is required as a cofactor.

The protein resides in the endoplasmic reticulum membrane. The enzyme catalyses ATP + protein L-histidine = ADP + protein N-phospho-L-histidine.. In terms of biological role, ethylene receptor related to bacterial two-component regulators. Acts as a negative regulator of ethylene signaling. May play a role in the regulation of flowering by up-regulating GI (GIGANTEA) and RCN1 and regulate starch accumulation by down-regulating the alpha-amylase AMY3D. This is Probable ethylene response sensor 2 (ERS2) from Oryza sativa subsp. japonica (Rice).